Reading from the N-terminus, the 264-residue chain is Thiazole synthase (264 aa).

Catalysis depends on Lys106, which acts as the Schiff-base intermediate with DXP. 1-deoxy-D-xylulose 5-phosphate-binding positions include Gly167, 193–194 (AG), and 215–216 (NS).

It belongs to the ThiG family. Homotetramer. Forms heterodimers with either ThiH or ThiS.

Its subcellular location is the cytoplasm. The catalysed reaction is [ThiS sulfur-carrier protein]-C-terminal-Gly-aminoethanethioate + 2-iminoacetate + 1-deoxy-D-xylulose 5-phosphate = [ThiS sulfur-carrier protein]-C-terminal Gly-Gly + 2-[(2R,5Z)-2-carboxy-4-methylthiazol-5(2H)-ylidene]ethyl phosphate + 2 H2O + H(+). The protein operates within cofactor biosynthesis; thiamine diphosphate biosynthesis. In terms of biological role, catalyzes the rearrangement of 1-deoxy-D-xylulose 5-phosphate (DXP) to produce the thiazole phosphate moiety of thiamine. Sulfur is provided by the thiocarboxylate moiety of the carrier protein ThiS. In vitro, sulfur can be provided by H(2)S. The protein is Thiazole synthase of Prochlorococcus marinus (strain MIT 9215).